The chain runs to 469 residues: Protein C-ets-2 (469 aa).

The PNT domain maps to 85–170; the sequence is ATFSGFKKEQ…EHLEQMIKEN (86 aa). Residues serine 220 and serine 225 each carry the phosphoserine modification. Residues 264-289 form a disordered region; sequence NLLTNNSGTPKDHDSPENGADSFESS. Phosphoserine is present on residues serine 295, serine 298, and serine 301. A DNA-binding region (ETS) is located at residues 363-443; sequence IQLWQFLLEL…SGKRYVYRFV (81 aa).

The protein belongs to the ETS family. Post-translationally, phosphorylation by CDK10 at Ser-220 and Ser-225 creates a phosphodegron that targets ETS2 for proteasomal degradation.

Its subcellular location is the nucleus. In terms of biological role, transcription factor activating transcription. Binds specifically the DNA GGAA/T core motif (Ets-binding site or EBS) in gene promoters and stimulates transcription. This chain is Protein C-ets-2 (ETS2), found in Homo sapiens (Human).